Consider the following 77-residue polypeptide: Putative defensin-like protein 187 (77 aa).

An N-terminal signal peptide occupies residues 1–19 (MKNSSIMFVLIVVFLISSS). 3 disulfide bridges follow: cysteine 31-cysteine 77, cysteine 43-cysteine 71, and cysteine 47-cysteine 73.

This sequence belongs to the DEFL family.

It localises to the secreted. The protein is Putative defensin-like protein 187 (LCR42) of Arabidopsis thaliana (Mouse-ear cress).